Reading from the N-terminus, the 581-residue chain is Oligo-1,6-glucosidase IMA5 (581 aa).

The Nucleophile role is filled by aspartate 210. Residue glutamate 272 is the Proton donor of the active site.

It belongs to the glycosyl hydrolase 13 family.

The enzyme catalyses Hydrolysis of (1-&gt;6)-alpha-D-glucosidic linkages in some oligosaccharides produced from starch and glycogen by alpha-amylase, and in isomaltose.. Alpha-glucosidase with specificity for isomaltose, maltose, and palatinose. The protein is Oligo-1,6-glucosidase IMA5 (IMA5) of Saccharomyces cerevisiae (strain ATCC 204508 / S288c) (Baker's yeast).